Reading from the N-terminus, the 422-residue chain is 26S proteasome non-ATPase regulatory subunit 11 (422 aa).

N-acetylalanine is present on Ala-2. Phosphoserine is present on residues Ser-14 and Ser-23. Positions 224–392 (DWKTAYSYFY…GVLIIFDEPP (169 aa)) constitute a PCI domain. A Glycyl lysine isopeptide (Lys-Gly) (interchain with G-Cter in SUMO2) cross-link involves residue Lys-274.

Belongs to the proteasome subunit S9 family. Component of the 19S proteasome regulatory particle complex. The 26S proteasome consists of a 20S core particle (CP) and two 19S regulatory subunits (RP). The regulatory particle is made of a lid composed of 9 subunits including PSMD11, a base containing 6 ATPases and few additional components. In terms of processing, phosphorylated by AMPK.

Its subcellular location is the nucleus. The protein resides in the cytoplasm. The protein localises to the cytosol. Component of the 26S proteasome, a multiprotein complex involved in the ATP-dependent degradation of ubiquitinated proteins. This complex plays a key role in the maintenance of protein homeostasis by removing misfolded or damaged proteins, which could impair cellular functions, and by removing proteins whose functions are no longer required. Therefore, the proteasome participates in numerous cellular processes, including cell cycle progression, apoptosis, or DNA damage repair. In the complex, PSMD11 is required for proteasome assembly. Plays a key role in increased proteasome activity in embryonic stem cells (ESCs): its high expression in ESCs promotes enhanced assembly of the 26S proteasome, followed by higher proteasome activity. The protein is 26S proteasome non-ATPase regulatory subunit 11 (PSMD11) of Bos taurus (Bovine).